Consider the following 365-residue polypeptide: MMGRRRAFAVDGRDGAGEGLARGCIVPGVTSTYRRIPDAAHGCSSWERGDKFRGVGREALFLKLASRDSGVEMAVGDSPLAALPGLSQDSLDFESSGSSEPPAQVGRLLASQKLGEVLERSRRLPTAPTSLSGQHRSLRLASKPEREVPLGAGQQESMEADTDLEAGLEEEAVGGLGPGAWACLPGQGLRYLEHLCLVLEQMARLQQLYLQLRIQRPPGDPGEEESTRAPLPSPLHTPGNRGQGPWELLSQTEHTGAKAASPPKVEVPSANPPRLPETPVEPTYHLPSSQGHKRDISHWDKVKVLLNRICRRSHHHPEPPAPPDGSDPRIESRDLPERPQCRPHRKTFMPSLVVKKQRAKNLSVG.

Disordered regions lie at residues 119 to 157 (ERSRRLPTAPTSLSGQHRSLRLASKPEREVPLGAGQQES), 216 to 298 (RPPG…DISH), and 313 to 365 (SHHH…LSVG). Positions 326–340 (SDPRIESRDLPERPQ) are enriched in basic and acidic residues.

This is an uncharacterized protein from Homo sapiens (Human).